Here is a 515-residue protein sequence, read N- to C-terminus: Histidine ammonia-lyase (515 aa).

The segment at residues 145–147 (ASG) is a cross-link (5-imidazolinone (Ala-Gly)). 2,3-didehydroalanine (Ser) is present on Ser-146.

Belongs to the PAL/histidase family. In terms of processing, contains an active site 4-methylidene-imidazol-5-one (MIO), which is formed autocatalytically by cyclization and dehydration of residues Ala-Ser-Gly.

It localises to the cytoplasm. It catalyses the reaction L-histidine = trans-urocanate + NH4(+). Its pathway is amino-acid degradation; L-histidine degradation into L-glutamate; N-formimidoyl-L-glutamate from L-histidine: step 1/3. This Gluconacetobacter diazotrophicus (strain ATCC 49037 / DSM 5601 / CCUG 37298 / CIP 103539 / LMG 7603 / PAl5) protein is Histidine ammonia-lyase.